The sequence spans 119 residues: Large ribosomal subunit protein bL20 (119 aa).

The protein belongs to the bacterial ribosomal protein bL20 family.

Its function is as follows. Binds directly to 23S ribosomal RNA and is necessary for the in vitro assembly process of the 50S ribosomal subunit. It is not involved in the protein synthesizing functions of that subunit. The polypeptide is Large ribosomal subunit protein bL20 (Acidovorax ebreus (strain TPSY) (Diaphorobacter sp. (strain TPSY))).